The following is a 347-amino-acid chain: Phosphate acyltransferase (347 aa).

Belongs to the PlsX family. As to quaternary structure, homodimer. Probably interacts with PlsY.

It is found in the cytoplasm. It catalyses the reaction a fatty acyl-[ACP] + phosphate = an acyl phosphate + holo-[ACP]. Its pathway is lipid metabolism; phospholipid metabolism. In terms of biological role, catalyzes the reversible formation of acyl-phosphate (acyl-PO(4)) from acyl-[acyl-carrier-protein] (acyl-ACP). This enzyme utilizes acyl-ACP as fatty acyl donor, but not acyl-CoA. The protein is Phosphate acyltransferase of Sinorhizobium medicae (strain WSM419) (Ensifer medicae).